The sequence spans 519 residues: Putative tyrosine carboxypeptidase MATCAP2 (519 aa).

Residues 63–103 (SKEEKKHRSQKRFSSASSKQHRKPSKSPSSSHSKDPSRMTA) form a disordered region. H330 lines the Zn(2+) pocket. The active-site Nucleophile is E331. Zn(2+)-binding residues include H335 and E366.

It depends on Zn(2+) as a cofactor.

Its function is as follows. Putative tyrosine carboxypeptidase. The sequence is that of Putative tyrosine carboxypeptidase MATCAP2 from Mus musculus (Mouse).